A 181-amino-acid chain; its full sequence is Inorganic pyrophosphatase (181 aa).

Substrate-binding residues include Lys16, Arg30, and Tyr42. Residues Asp52, Asp57, and Asp89 each coordinate Mg(2+). Tyr126 lines the substrate pocket.

It belongs to the PPase family. In terms of assembly, homohexamer. Requires Mg(2+) as cofactor.

The protein localises to the cytoplasm. It catalyses the reaction diphosphate + H2O = 2 phosphate + H(+). Its function is as follows. Catalyzes the hydrolysis of inorganic pyrophosphate (PPi) forming two phosphate ions. The protein is Inorganic pyrophosphatase of Ureaplasma parvum serovar 3 (strain ATCC 700970).